We begin with the raw amino-acid sequence, 49 residues long: Large ribosomal subunit protein bL33 (49 aa).

The interval 18-49 (ITTKNKRNNPERLELKKYSPRLKRTTLHRETK) is disordered. Positions 25-34 (NNPERLELKK) are enriched in basic and acidic residues.

Belongs to the bacterial ribosomal protein bL33 family.

In Lysinibacillus sphaericus (strain C3-41), this protein is Large ribosomal subunit protein bL33.